The primary structure comprises 315 residues: L-lactate dehydrogenase (315 aa).

The NAD(+) site is built by Val-14, Asp-35, and Tyr-66. Residues Gln-83, Arg-89, and 121–124 (NPVD) contribute to the substrate site. NAD(+) is bound by residues 119 to 121 (VAN) and Ser-144. Substrate is bound at residue 149–152 (DTAR). The active-site Proton acceptor is His-176. Tyr-221 carries the post-translational modification Phosphotyrosine. Thr-230 serves as a coordination point for substrate.

This sequence belongs to the LDH/MDH superfamily. LDH family. Homotetramer.

The protein localises to the cytoplasm. The catalysed reaction is (S)-lactate + NAD(+) = pyruvate + NADH + H(+). It participates in fermentation; pyruvate fermentation to lactate; (S)-lactate from pyruvate: step 1/1. In terms of biological role, catalyzes the conversion of lactate to pyruvate. The polypeptide is L-lactate dehydrogenase (Mesomycoplasma hyopneumoniae (strain 232) (Mycoplasma hyopneumoniae)).